The primary structure comprises 369 residues: Septin-5 (369 aa).

Position 13 is a phosphothreonine (threonine 13). The Septin-type G domain occupies 41–314 (KGFDFTLMVA…ENYRAHCIQQ (274 aa)). The G1 motif stretch occupies residues 51-58 (GESGLGKS). GTP-binding positions include 51 to 58 (GESGLGKS), threonine 85, and glycine 111. The interval 108–111 (DTPG) is G3 motif. Arginine 168 bears the Omega-N-methylarginine mark. The tract at residues 189–192 (AKAD) is G4 motif. 190-198 (KADCLVPSE) provides a ligand contact to GTP. A Phosphoserine modification is found at serine 225. Positions 248 and 263 each coordinate GTP. A Phosphoserine modification is found at serine 327. Threonine 336 is subject to Phosphothreonine. The stretch at 338–369 (DSETEKLIRMKDEELRRMQEMLQKMKQRMQDQ) forms a coiled coil.

This sequence belongs to the TRAFAC class TrmE-Era-EngA-EngB-Septin-like GTPase superfamily. Septin GTPase family. In terms of assembly, septins polymerize into heterooligomeric protein complexes that form filaments, and can associate with cellular membranes, actin filaments and microtubules. GTPase activity is required for filament formation. Interacts with SEPTIN2 and SEPTIN5. In platelets, associated with a complex containing STX4. Interacts with PRKN; this interaction leads to SEPTIN5 ubiquitination and degradation. Interacts with DYRK1A. Interacts with STX1A; in the cerebellar cortex. Post-translationally, phosphorylated by DYRK1A. As to expression, expressed in brain and testis and at lower level in heart, spleen, lung and kidney.

The protein localises to the cytoplasm. Its subcellular location is the cytoskeleton. Filament-forming cytoskeletal GTPase. May play a role in cytokinesis (Potential). May play a role in platelet secretion. This Rattus norvegicus (Rat) protein is Septin-5.